Consider the following 184-residue polypeptide: Photosystem I assembly protein Ycf4 (184 aa).

Transmembrane regions (helical) follow at residues 21–43 (NYFW…VSSY) and 63–85 (GIVM…FTIF).

Belongs to the Ycf4 family.

It is found in the plastid. The protein resides in the chloroplast thylakoid membrane. Functionally, seems to be required for the assembly of the photosystem I complex. In Chaetosphaeridium globosum (Charophycean green alga), this protein is Photosystem I assembly protein Ycf4.